The sequence spans 275 residues: Methyltransferase str2 (275 aa).

The protein belongs to the methyltransferase superfamily. LaeA methyltransferase family.

Its pathway is mycotoxin biosynthesis. In terms of biological role, methyltransferase; part of the gene cluster that mediates the biosynthesis of strobilurin A, an antifungal polyketide that contains a key beta-methoxyacrylate toxophore that targets the complex III of the mitochondrial electron transport chain. Strobilurin biosynthesis begins with construction of benzoyl CoA by step-wise elimination of ammonia from phenylalanine by the phenylalanine ammonia-lyase str11, oxygenation by str8 and retro-Claisen reaction to form benzoic acid, which is activated to its CoA thiolester benzoyl CoA by the dedicated CoA ligase str10. Benzoyl CoA forms the starter unit for the highly reducing polyketide synthase stpks1 that produces the polyketide prestrobilutin A. The FAD-dependent oxygenase str9 then catalyzes the key oxidative rearrangement responsible for the creation of the beta-methoxyacrylate toxophore. Str9 performs epoxidation of the 2,3 olefin of prestrobilutin A, followed by Meinwald rearrangement to furnish the aldehyde intermediate. Rapid enolization of the aldehyde intermediate would give the beta-methoxyacrylate skeleton and methylations catalyzed by str2 and str3 complete the synthesis and lead to the production of strobilurin A. The short-chain dehydrogenase stl2 and the dehydrogenase str4 play a role in the shunt pathway leading to the production of bolineol. The cluster encodes no obvious halogenase gene that could be involved in production of strobilurin B, nor any obvious dimethylallyl-transferase that could be involved in the production of strobilurin G. It is possible that unknown proteins encoded in, or near, the cluster (such as str1 or stl1) may form new classes of halogenases or dimethylally-transferases, or that the responsible genes are located elsewhere on the genome. Similarly, proteins encoded by str5/str6 hydrolases appear to have no chemical role in the biosynthesis of strobilurin A. Finally, no obvious self-resistance gene is found within the cluster. This is Methyltransferase str2 from Strobilurus tenacellus.